The chain runs to 100 residues: Urease subunit gamma (100 aa).

The protein belongs to the urease gamma subunit family. In terms of assembly, heterotrimer of UreA (gamma), UreB (beta) and UreC (alpha) subunits. Three heterotrimers associate to form the active enzyme.

Its subcellular location is the cytoplasm. It carries out the reaction urea + 2 H2O + H(+) = hydrogencarbonate + 2 NH4(+). It participates in nitrogen metabolism; urea degradation; CO(2) and NH(3) from urea (urease route): step 1/1. The chain is Urease subunit gamma from Corynebacterium urealyticum (strain ATCC 43042 / DSM 7109).